We begin with the raw amino-acid sequence, 113 residues long: Integration host factor subunit alpha (113 aa).

The segment at 59–80 (GNFQVRDKPPRPGRNPKTGETI) is disordered.

The protein belongs to the bacterial histone-like protein family. As to quaternary structure, heterodimer of an alpha and a beta chain.

Its function is as follows. This protein is one of the two subunits of integration host factor, a specific DNA-binding protein that functions in genetic recombination as well as in transcriptional and translational control. The sequence is that of Integration host factor subunit alpha from Bordetella bronchiseptica (strain ATCC BAA-588 / NCTC 13252 / RB50) (Alcaligenes bronchisepticus).